Consider the following 854-residue polypeptide: V-type proton ATPase 116 kDa subunit a 2 (854 aa).

The Cytoplasmic segment spans residues 1-393 (MGSLFRSETM…DAYGVGSYQE (393 aa)). The helical transmembrane segment at 394 to 412 (VNPALFTIITFPFLFAVMF) threads the bilayer. At 413 to 414 (GD) the chain is on the vacuolar side. A helical transmembrane segment spans residues 415–431 (FGHGFVMFLFALLLVLN). The Cytoplasmic portion of the chain corresponds to 432-445 (ENHPRLNQSQEIMR). Residues 446 to 475 (MFFNGRYILLLMGLFSVYTGLIYNDCFSKS) traverse the membrane as a helical segment. Residues 476–549 (VNLFGSRWNV…ATNRLTFLNS (74 aa)) lie on the Vacuolar side of the membrane. The helical transmembrane segment at 550-569 (FKMKMSVILGITHMTFGVIL) threads the bilayer. Over 570 to 587 (GIFNHLHFRKKFNICLVS) the chain is Cytoplasmic. Residues 588–608 (IPELLFMLCIFGYLIFMIIYK) traverse the membrane as a helical segment. The Vacuolar segment spans residues 609-651 (WLVYSAETSRTAPSILIEFISMFLFLASDTGGLYPGQEHVQRL). Residues 652–671 (LLLITVLSVPVLFLGKPLFL) form a helical membrane-spanning segment. Residues 672-739 (LWLHRGRSCF…EILMTQIIHS (68 aa)) are Cytoplasmic-facing. 2 positions are modified to phosphoserine: Ser-695 and Ser-700. A helical membrane pass occupies residues 740–764 (IEYCLGCISNTASYLRLWALSLAHA). Over 765–785 (QLSEVLWAMLMHVGLRVDTAY) the chain is Vacuolar. A helical membrane pass occupies residues 786–824 (GVLVLLPVIAFFAVLTIFILLIMEGLSAFLHAIRLHWVE). Topologically, residues 825-854 (FQNKFYVGAGTKFVPFSFRLLSSKFSDDLA) are cytoplasmic.

Belongs to the V-ATPase 116 kDa subunit family. V-ATPase is a heteromultimeric enzyme made up of two complexes: the ATP-hydrolytic V1 complex and the proton translocation V0 complex. The V1 complex consists of three catalytic AB heterodimers that form a heterohexamer, three peripheral stalks each consisting of EG heterodimers, one central rotor including subunits D and F, and the regulatory subunits C and H. The proton translocation complex V0 consists of the proton transport subunit a, a ring of proteolipid subunits c9c'', rotary subunit d, subunits e and f, and the accessory subunits ATP6AP1/Ac45 and ATP6AP2/PRR. Directly interacts with PSCD2 through its N-terminal cytosolic tail in an intra-endosomal acidification-dependent manner. Disruption of this interaction results in the inhibition of endocytosis. Interacts with SPAAR. As to expression, highly expressed in lung, kidney and spleen.

It localises to the cell membrane. The protein resides in the endosome membrane. Subunit of the V0 complex of vacuolar(H+)-ATPase (V-ATPase), a multisubunit enzyme composed of a peripheral complex (V1) that hydrolyzes ATP and a membrane integral complex (V0) that translocates protons. V-ATPase is responsible for acidifying and maintaining the pH of intracellular compartments and in some cell types, is targeted to the plasma membrane, where it is responsible for acidifying the extracellular environment. Essential component of the endosomal pH-sensing machinery. May play a role in maintaining the Golgi functions, such as glycosylation maturation, by controlling the Golgi pH. In aerobic conditions, involved in intracellular iron homeostasis, thus triggering the activity of Fe(2+) prolyl hydroxylase (PHD) enzymes, and leading to HIF1A hydroxylation and subsequent proteasomal degradation. This Bos taurus (Bovine) protein is V-type proton ATPase 116 kDa subunit a 2 (ATP6V0A2).